Consider the following 329-residue polypeptide: Tryptophan--tRNA ligase (329 aa).

Residues 9–11 (QPS) and 17–18 (GN) each bind ATP. Positions 10–18 (PSGIPTIGN) match the 'HIGH' region motif. An L-tryptophan-binding site is contributed by D133. ATP contacts are provided by residues 145 to 147 (GDD), V184, and 193 to 197 (KMSKS). The 'KMSKS' region motif lies at 193–197 (KMSKS).

It belongs to the class-I aminoacyl-tRNA synthetase family. As to quaternary structure, homodimer.

It localises to the cytoplasm. The enzyme catalyses tRNA(Trp) + L-tryptophan + ATP = L-tryptophyl-tRNA(Trp) + AMP + diphosphate + H(+). Its function is as follows. Catalyzes the attachment of tryptophan to tRNA(Trp). The sequence is that of Tryptophan--tRNA ligase from Staphylococcus aureus (strain MSSA476).